The primary structure comprises 712 residues: Polyribonucleotide nucleotidyltransferase (712 aa).

Positions 487 and 493 each coordinate Mg(2+). The KH domain occupies 554–613 (PKIITMTINPDKIRDVIGPSGKQINKIIEETGVKIDIEQDGTVFISSINQEMNDKAKKII). The region spanning 623 to 691 (GEIYEGKVKR…KQGRVNLSRK (69 aa)) is the S1 motif domain.

This sequence belongs to the polyribonucleotide nucleotidyltransferase family. Requires Mg(2+) as cofactor.

The protein resides in the cytoplasm. It catalyses the reaction RNA(n+1) + phosphate = RNA(n) + a ribonucleoside 5'-diphosphate. Functionally, involved in mRNA degradation. Catalyzes the phosphorolysis of single-stranded polyribonucleotides processively in the 3'- to 5'-direction. The sequence is that of Polyribonucleotide nucleotidyltransferase from Bacillus anthracis.